The sequence spans 613 residues: Na(+)/H(+) antiporter NhaA 1 (613 aa).

The segment at 1–24 (MTEASARTIGPLPSRFSRDPKTPR) is disordered. The segment at 1–408 (MTEASARTIG…DPARQDEARV (408 aa)) is na(+)/H(+) antiporter NhaA. 11 helical membrane-spanning segments follow: residues 29-49 (AAAALLLAFTVLAILWANSPW), 81-101 (GLMAFFFFIVGLEVKSEFVIG), 110-130 (AVPVVAAIAGLIVPAVIFLTF), 138-158 (QAWGVVISTDTAFLVGALAVI), 168-188 (IFLLTLAVVDDVGALGAIALF), 191-211 (DDLKLAPLAVAALLIAALAMV), 231-251 (IALYLAHVHPTLAGVAVAVLI), 300-320 (AVGPYVSFVVLPIFALANAGV), 337-357 (WGIVAGLVVGKFVGITAATAL), 377-397 (GGAALSGIGFTISLFIVDVAI), and 408-428 (VGVLIASVLAFTLSWALFRIT). One can recognise a Thioredoxin domain in the interval 409-613 (GVLIASVLAF…SLIRALEAGR (205 aa)).

The protein in the N-terminal section; belongs to the NhaA Na(+)/H(+) (TC 2.A.33) antiporter family.

It localises to the cell membrane. The catalysed reaction is Na(+)(in) + 2 H(+)(out) = Na(+)(out) + 2 H(+)(in). In terms of biological role, na(+)/H(+) antiporter that extrudes sodium in exchange for external protons. This is Na(+)/H(+) antiporter NhaA 1 from Mycobacterium sp. (strain JLS).